A 474-amino-acid chain; its full sequence is MIMNKMKNFKRRFSLSVPRTETIEESLAEFTEQFNQLHNRRNEDLQLGPLGRDPLQECSTFSPTDSGEEPGQLSPGVQFQRRQNQRRFSMEDVSKRLSLPMDIRLPQEFLQKLQMESPDLPKPLSRMSRRASLSDIGFGKLETYVKLDKLGEGTYATVFKGRSKLTENLVALKEIRLEHEEGAPCTAIREVSLLKNLKHANIVTLHDLIHTDRSLTLVFEYLDSDLKQYLDHCGNLMSMHNVKIFMFQLLRGLAYCHHRKILHRDLKPQNLLINERGELKLADFGLARAKSVPTKTYSNEVVTLWYRPPDVLLGSTEYSTPIDMWGVGCIHYEMATGRPLFPGSTVKEELHLIFRLLGTPTEETWPGVTAFSEFRTYSFPRYLPQPLISHAPRLDTDGIQLLSSLLLYESKSRMSAEAALSHPYFRSLGERVHQLEDTASIFSLKEIQLQKDPGYRGLAFQQPGRGKNRRQSIF.

Ser14, Ser74, Ser89, Ser98, Ser117, and Ser132 each carry phosphoserine. The tract at residues 44–87 (DLQLGPLGRDPLQECSTFSPTDSGEEPGQLSPGVQFQRRQNQRR) is disordered. The region spanning 144–425 (YVKLDKLGEG…AEAALSHPYF (282 aa)) is the Protein kinase domain. Residues 150–158 (LGEGTYATV) and Lys173 contribute to the ATP site. The active-site Proton acceptor is Asp265. Phosphoserine occurs at positions 440 and 443.

Belongs to the protein kinase superfamily. CMGC Ser/Thr protein kinase family. CDC2/CDKX subfamily.

The enzyme catalyses L-seryl-[protein] + ATP = O-phospho-L-seryl-[protein] + ADP + H(+). It carries out the reaction L-threonyl-[protein] + ATP = O-phospho-L-threonyl-[protein] + ADP + H(+). In terms of biological role, may play a role in signal transduction cascades in terminally differentiated cells. The polypeptide is Cyclin-dependent kinase 18 (CDK18) (Pongo abelii (Sumatran orangutan)).